We begin with the raw amino-acid sequence, 150 residues long: Nucleoside diphosphate kinase (150 aa).

Positions 9, 57, 85, 91, 102, and 112 each coordinate ATP. Residue H115 is the Pros-phosphohistidine intermediate of the active site.

This sequence belongs to the NDK family. It depends on Mg(2+) as a cofactor.

It localises to the cytoplasm. The enzyme catalyses a 2'-deoxyribonucleoside 5'-diphosphate + ATP = a 2'-deoxyribonucleoside 5'-triphosphate + ADP. It catalyses the reaction a ribonucleoside 5'-diphosphate + ATP = a ribonucleoside 5'-triphosphate + ADP. In terms of biological role, major role in the synthesis of nucleoside triphosphates other than ATP. The ATP gamma phosphate is transferred to the NDP beta phosphate via a ping-pong mechanism, using a phosphorylated active-site intermediate. The chain is Nucleoside diphosphate kinase from Methanothermobacter thermautotrophicus (strain ATCC 29096 / DSM 1053 / JCM 10044 / NBRC 100330 / Delta H) (Methanobacterium thermoautotrophicum).